A 478-amino-acid polypeptide reads, in one-letter code: Protein nucleotidyltransferase YdiU (478 aa).

8 residues coordinate ATP: Gly84, Gly86, Arg87, Lys107, Asp119, Gly120, Arg170, and Arg177. Asp246 (proton acceptor) is an active-site residue. Mg(2+) contacts are provided by Asn247 and Asp256. Asp256 is a binding site for ATP.

This sequence belongs to the SELO family. It depends on Mg(2+) as a cofactor. Mn(2+) serves as cofactor.

It carries out the reaction L-seryl-[protein] + ATP = 3-O-(5'-adenylyl)-L-seryl-[protein] + diphosphate. The catalysed reaction is L-threonyl-[protein] + ATP = 3-O-(5'-adenylyl)-L-threonyl-[protein] + diphosphate. It catalyses the reaction L-tyrosyl-[protein] + ATP = O-(5'-adenylyl)-L-tyrosyl-[protein] + diphosphate. The enzyme catalyses L-histidyl-[protein] + UTP = N(tele)-(5'-uridylyl)-L-histidyl-[protein] + diphosphate. It carries out the reaction L-seryl-[protein] + UTP = O-(5'-uridylyl)-L-seryl-[protein] + diphosphate. The catalysed reaction is L-tyrosyl-[protein] + UTP = O-(5'-uridylyl)-L-tyrosyl-[protein] + diphosphate. Functionally, nucleotidyltransferase involved in the post-translational modification of proteins. It can catalyze the addition of adenosine monophosphate (AMP) or uridine monophosphate (UMP) to a protein, resulting in modifications known as AMPylation and UMPylation. This chain is Protein nucleotidyltransferase YdiU, found in Escherichia coli O81 (strain ED1a).